The primary structure comprises 108 residues: MMKGGMAGLMKQAQLMQEKMQKLQEEIANAEVTGQSGAGLVSVVMTGRHDVRRVTLDDSLMQEDKEVLEDLIAAAVNDAVRKIEQNNQEKMAGMTAGMGLPPGFKMPF.

The protein belongs to the YbaB/EbfC family. In terms of assembly, homodimer.

Its subcellular location is the cytoplasm. The protein localises to the nucleoid. Its function is as follows. Binds to DNA and alters its conformation. May be involved in regulation of gene expression, nucleoid organization and DNA protection. This chain is Nucleoid-associated protein Avin_19840, found in Azotobacter vinelandii (strain DJ / ATCC BAA-1303).